Consider the following 1407-residue polypeptide: DNA-directed RNA polymerase subunit beta' (1407 aa).

4 residues coordinate Zn(2+): C70, C72, C85, and C88. Residues D460, D462, and D464 each coordinate Mg(2+). K972 bears the N6-acetyllysine mark.

Belongs to the RNA polymerase beta' chain family. As to quaternary structure, the RNAP catalytic core consists of 2 alpha, 1 beta, 1 beta' and 1 omega subunit. When a sigma factor is associated with the core the holoenzyme is formed, which can initiate transcription. Mg(2+) serves as cofactor. Requires Zn(2+) as cofactor.

The catalysed reaction is RNA(n) + a ribonucleoside 5'-triphosphate = RNA(n+1) + diphosphate. Its function is as follows. DNA-dependent RNA polymerase catalyzes the transcription of DNA into RNA using the four ribonucleoside triphosphates as substrates. The protein is DNA-directed RNA polymerase subunit beta' of Escherichia coli O6:K15:H31 (strain 536 / UPEC).